The primary structure comprises 394 residues: Chalcone synthase 4 (394 aa).

Cys165 is an active-site residue.

This sequence belongs to the thiolase-like superfamily. Chalcone/stilbene synthases family.

The enzyme catalyses (E)-4-coumaroyl-CoA + 3 malonyl-CoA + 3 H(+) = 2',4,4',6'-tetrahydroxychalcone + 3 CO2 + 4 CoA. It functions in the pathway secondary metabolite biosynthesis; flavonoid biosynthesis. In terms of biological role, the primary product of this enzyme is 4,2',4',6'-tetrahydroxychalcone (also termed naringenin-chalcone or chalcone) which can under specific conditions spontaneously isomerize into naringenin. This is Chalcone synthase 4 (CHS4) from Bromheadia finlaysoniana (Orchid).